A 132-amino-acid chain; its full sequence is Small ribosomal subunit protein uS8 (132 aa).

Belongs to the universal ribosomal protein uS8 family. As to quaternary structure, part of the 30S ribosomal subunit. Contacts proteins S5 and S12.

In terms of biological role, one of the primary rRNA binding proteins, it binds directly to 16S rRNA central domain where it helps coordinate assembly of the platform of the 30S subunit. The chain is Small ribosomal subunit protein uS8 from Methylocella silvestris (strain DSM 15510 / CIP 108128 / LMG 27833 / NCIMB 13906 / BL2).